The chain runs to 462 residues: Kinetochore protein nsk1 (462 aa).

A compositionally biased stretch (polar residues) spans 104-120 (PSKNHETSLSPSKSTID). Disordered regions lie at residues 104-161 (PSKN…CPGI), 180-240 (EKYG…PLRT), and 320-462 (NQLF…NIQS). Residues 121-138 (NNERKLDNEIDNYKHDVK) are compositionally biased toward basic and acidic residues. Residues 146–156 (GKTSNPSQGTT) show a composition bias toward polar residues. Positions 180-189 (EKYGKTDLGK) are enriched in basic and acidic residues. The segment covering 229–240 (KNRSSTFSPLRT) has biased composition (polar residues). The span at 324–333 (KSEEEKDPVG) shows a compositional bias: basic and acidic residues. A compositionally biased stretch (polar residues) spans 422–444 (WPQNLAKNNINSEPNTPTKSNID). The span at 449–462 (HSARAHKTRKNIQS) shows a compositional bias: basic residues.

Interacts with dlc1. The dlc1-nsk1 complex seems to oligomerize in chain-like structures. Also binds directly to spindle microtubules. Post-translationally, phosphorylated by cdk1 at prometaphase arrest. Phosphorylation prevents nsk1 kinetochore and spindle targeting. Dephosphorylated by clp1 at anaphase onset controls its relocalization.

The protein resides in the nucleus. It is found in the nucleolus. The protein localises to the cytoplasm. Its subcellular location is the cytoskeleton. It localises to the spindle. The protein resides in the chromosome. It is found in the centromere. The protein localises to the kinetochore. Functionally, ensures chromosome alignment and accurate chromosome segregation during mitosis. Promotes proper kinetochore-microtubule (k-MT) interactions during anaphase B. The phosphorylation status of nsk1 affects the proper k-MT coupling, ensuring that it interacts stably only at the correct time during mitosis. In Schizosaccharomyces pombe (strain 972 / ATCC 24843) (Fission yeast), this protein is Kinetochore protein nsk1 (nsk1).